The primary structure comprises 240 residues: Aliphatic sulfonates import ATP-binding protein SsuB 2 (240 aa).

Residues 2–218 enclose the ABC transporter domain; it reads VRTRELRRGF…RHSAPEFIHA (217 aa). Residue 34–41 coordinates ATP; the sequence is GRSGSGKS.

Belongs to the ABC transporter superfamily. Aliphatic sulfonates importer (TC 3.A.1.17.2) family. The complex is composed of two ATP-binding proteins (SsuB), two transmembrane proteins (SsuC) and a solute-binding protein (SsuA).

The protein resides in the cell membrane. The enzyme catalyses ATP + H2O + aliphatic sulfonate-[sulfonate-binding protein]Side 1 = ADP + phosphate + aliphatic sulfonateSide 2 + [sulfonate-binding protein]Side 1.. Functionally, part of the ABC transporter complex SsuABC involved in aliphatic sulfonates import. Responsible for energy coupling to the transport system. This Nocardia farcinica (strain IFM 10152) protein is Aliphatic sulfonates import ATP-binding protein SsuB 2.